Here is a 596-residue protein sequence, read N- to C-terminus: Fc receptor-like protein 5 (596 aa).

A signal peptide spans 1 to 26 (MSGSFSPCVVFTQMWLTLLVVTPVNG). The Extracellular portion of the chain corresponds to 27–496 (QHEAAQQSVV…MTKNRSVPMA (470 aa)). 5 Ig-like C2-type domains span residues 34–115 (SVVS…VEFS), 106–199 (PSMH…NTVV), 207–294 (PRPV…TAFI), 296–384 (PVQR…SFVS), and 398–483 (PVLT…IRIS). 3 cysteine pairs are disulfide-bonded: Cys-55–Cys-99, Cys-137–Cys-181, and Cys-228–Cys-277. Residue Asn-324 is glycosylated (N-linked (GlcNAc...) asparagine). 2 cysteine pairs are disulfide-bonded: Cys-325–Cys-373 and Cys-419–Cys-466. Asn-436 carries N-linked (GlcNAc...) asparagine glycosylation. The helical transmembrane segment at 497–517 (AGITVGLLIMAVGVFLFYCWF) threads the bilayer. At 518-596 (SRKAGGKPTS…RSRCQMAEKK (79 aa)) the chain is on the cytoplasmic side. Disordered stretches follow at residues 522-544 (GGKPTSDDSRNPSDSEPQEPTYY) and 561-596 (EENVIYTEVRRTQPRQKHADQESESPRSRCQMAEKK). A compositionally biased stretch (basic and acidic residues) spans 577–596 (KHADQESESPRSRCQMAEKK).

As to quaternary structure, interacts with CR2. Interacts with CD19. Phosphorylated on cytoplasmic tyrosines; required for interaction with protein tyrosine phosphatases and protein tyrosine kinases. As to expression, preferentially expressed in marginal zone B cells.

It localises to the cell membrane. Plays an important role in B-cell response to antigen that acts both as a negative or positive coreceptor. Inhibits B-cell receptor (BCR) signaling in the absence of CR2 stimulation but engagement with CR2 and the BCR lead to a superior calcium response compared to CR2 and BCR costimulation. May be involved in B-cell development and differentiation in peripheral lymphoid organs and may be useful markers of B-cell stages. May have an immunoregulatory role in marginal zone B-cells. May play a role in fertilization. This Mus musculus (Mouse) protein is Fc receptor-like protein 5 (Fcrl5).